A 280-amino-acid chain; its full sequence is F-box only protein 27 (280 aa).

Positions 1–26 are disordered; sequence MGAWASRGRAARVPAPEPESEPEEAL. The region spanning 25–72 is the F-box domain; it reads ALDLSQLPPELLLVVLSHVPPRTLLGRCRQVCRGWRALVDGQALWLLI. One can recognise an FBA domain in the interval 100–277; sequence PCPLGRFCAR…VTNSSVIVRV (178 aa).

Part of a SCF (SKP1-cullin-F-box) protein ligase complex. Interacts with SKP1 and CUL1.

Functionally, substrate-recognition component of the SCF (SKP1-CUL1-F-box protein)-type E3 ubiquitin ligase complex. Able to recognize and bind complex-type oligosaccharides. The protein is F-box only protein 27 (FBXO27) of Macaca fascicularis (Crab-eating macaque).